The following is a 235-amino-acid chain: Ubiquitin-like-conjugating enzyme ATG10 (235 aa).

The Glycyl thioester intermediate role is filled by Cys196.

It belongs to the ATG10 family. As to quaternary structure, forms homooligomers. Interacts with ATG7 and ATG12.

It localises to the preautophagosomal structure membrane. Its function is as follows. E2-like enzyme required for the cytoplasm to vacuole transport (Cvt), autophagy and nucleophagy. Acts as an E2-like enzyme that catalyzes the conjugation of ATG12 to ATG5. ATG12 conjugation to ATG5 is required for proper localization of ATG8 to the preautophagosomal structure (PAS). Likely serves as an ATG5-recognition molecule. Autophagy is required for proper vegetative growth, asexual/sexual reproduction, and full virulence. Autophagy is particularly involved in the biosynthesis of deoxynivalenol (DON), an important virulence determinant. This Gibberella zeae (strain ATCC MYA-4620 / CBS 123657 / FGSC 9075 / NRRL 31084 / PH-1) (Wheat head blight fungus) protein is Ubiquitin-like-conjugating enzyme ATG10.